The sequence spans 207 residues: Alpha-1-acid glycoprotein 1 (207 aa).

A signal peptide spans 1–18 (MALHMILVMLSLLPLLEA). A Pyrrolidone carboxylic acid modification is found at glutamine 19. Residues asparagine 25, asparagine 34, asparagine 76, asparagine 94, and asparagine 104 are each glycosylated (N-linked (GlcNAc...) asparagine). Cysteine 91 and cysteine 184 are joined by a disulfide.

The protein belongs to the calycin superfamily. Lipocalin family. Expressed by the liver and secreted in plasma.

Its subcellular location is the secreted. Functionally, functions as a transport protein in the blood stream. Binds various ligands in the interior of its beta-barrel domain. Appears to function in modulating the activity of the immune system during the acute-phase reaction. In Mus caroli (Ryukyu mouse), this protein is Alpha-1-acid glycoprotein 1 (Orm1).